The primary structure comprises 204 residues: Protein GrpE (204 aa).

A disordered region spans residues 1 to 55 (MSSKNNPESETKAKNKWEKVMEAEEEQEEGRGDGSQEMEPHREGLEFPSREKLEG). Basic and acidic residues-rich tracts occupy residues 7–22 (PESE…KVME) and 29–55 (EGRG…KLEG).

The protein belongs to the GrpE family. As to quaternary structure, homodimer.

It localises to the cytoplasm. Functionally, participates actively in the response to hyperosmotic and heat shock by preventing the aggregation of stress-denatured proteins, in association with DnaK and GrpE. It is the nucleotide exchange factor for DnaK and may function as a thermosensor. Unfolded proteins bind initially to DnaJ; upon interaction with the DnaJ-bound protein, DnaK hydrolyzes its bound ATP, resulting in the formation of a stable complex. GrpE releases ADP from DnaK; ATP binding to DnaK triggers the release of the substrate protein, thus completing the reaction cycle. Several rounds of ATP-dependent interactions between DnaJ, DnaK and GrpE are required for fully efficient folding. This chain is Protein GrpE, found in Coxiella burnetii (strain RSA 331 / Henzerling II).